A 318-amino-acid chain; its full sequence is Biotin synthase (318 aa).

In terms of domain architecture, Radical SAM core spans 44 to 273 (LCGNKFDLCT…TVQIRLAGGR (230 aa)). Residues cysteine 62, cysteine 66, and cysteine 69 each coordinate [4Fe-4S] cluster. Serine 106, cysteine 138, cysteine 198, and arginine 268 together coordinate [2Fe-2S] cluster.

Belongs to the radical SAM superfamily. Biotin synthase family. Homodimer. [4Fe-4S] cluster serves as cofactor. Requires [2Fe-2S] cluster as cofactor.

It carries out the reaction (4R,5S)-dethiobiotin + (sulfur carrier)-SH + 2 reduced [2Fe-2S]-[ferredoxin] + 2 S-adenosyl-L-methionine = (sulfur carrier)-H + biotin + 2 5'-deoxyadenosine + 2 L-methionine + 2 oxidized [2Fe-2S]-[ferredoxin]. It participates in cofactor biosynthesis; biotin biosynthesis; biotin from 7,8-diaminononanoate: step 2/2. Catalyzes the conversion of dethiobiotin (DTB) to biotin by the insertion of a sulfur atom into dethiobiotin via a radical-based mechanism. This is Biotin synthase from Clostridium botulinum (strain Loch Maree / Type A3).